The primary structure comprises 103 residues: UPF0298 protein LACR_0404 (103 aa).

It belongs to the UPF0298 family.

Its subcellular location is the cytoplasm. This chain is UPF0298 protein LACR_0404, found in Lactococcus lactis subsp. cremoris (strain SK11).